The primary structure comprises 373 residues: tRNA-specific 2-thiouridylase MnmA (373 aa).

ATP-binding positions include 12–19 and Met38; that span reads GMSGGVDS. Positions 98-100 are interaction with target base in tRNA; that stretch reads NPD. Cys103 serves as the catalytic Nucleophile. A disulfide bridge connects residues Cys103 and Cys200. Residue Gly127 participates in ATP binding. The segment at 150 to 152 is interaction with tRNA; sequence KDQ. Residue Cys200 is the Cysteine persulfide intermediate of the active site. An interaction with tRNA region spans residues 312–313; the sequence is RY.

This sequence belongs to the MnmA/TRMU family.

It localises to the cytoplasm. It carries out the reaction S-sulfanyl-L-cysteinyl-[protein] + uridine(34) in tRNA + AH2 + ATP = 2-thiouridine(34) in tRNA + L-cysteinyl-[protein] + A + AMP + diphosphate + H(+). Catalyzes the 2-thiolation of uridine at the wobble position (U34) of tRNA, leading to the formation of s(2)U34. The chain is tRNA-specific 2-thiouridylase MnmA from Streptococcus pneumoniae (strain CGSP14).